The primary structure comprises 447 residues: N-succinylarginine dihydrolase (447 aa).

Substrate is bound by residues 19-28 (GGLAVGNIAS), asparagine 110, and 137-138 (HR). Glutamate 174 is a catalytic residue. Substrate is bound at residue arginine 213. Histidine 249 is an active-site residue. Substrate contacts are provided by aspartate 251 and asparagine 362. Cysteine 368 functions as the Nucleophile in the catalytic mechanism.

Belongs to the succinylarginine dihydrolase family. Homodimer.

It carries out the reaction N(2)-succinyl-L-arginine + 2 H2O + 2 H(+) = N(2)-succinyl-L-ornithine + 2 NH4(+) + CO2. Its pathway is amino-acid degradation; L-arginine degradation via AST pathway; L-glutamate and succinate from L-arginine: step 2/5. Its function is as follows. Catalyzes the hydrolysis of N(2)-succinylarginine into N(2)-succinylornithine, ammonia and CO(2). The chain is N-succinylarginine dihydrolase from Nitrosospira multiformis (strain ATCC 25196 / NCIMB 11849 / C 71).